Reading from the N-terminus, the 289-residue chain is Bifunctional protein FolD (289 aa).

NADP(+)-binding positions include 166 to 168 (GRS), S191, and I232.

The protein belongs to the tetrahydrofolate dehydrogenase/cyclohydrolase family. Homodimer.

The enzyme catalyses (6R)-5,10-methylene-5,6,7,8-tetrahydrofolate + NADP(+) = (6R)-5,10-methenyltetrahydrofolate + NADPH. It catalyses the reaction (6R)-5,10-methenyltetrahydrofolate + H2O = (6R)-10-formyltetrahydrofolate + H(+). Its pathway is one-carbon metabolism; tetrahydrofolate interconversion. Catalyzes the oxidation of 5,10-methylenetetrahydrofolate to 5,10-methenyltetrahydrofolate and then the hydrolysis of 5,10-methenyltetrahydrofolate to 10-formyltetrahydrofolate. This chain is Bifunctional protein FolD, found in Synechococcus elongatus (strain ATCC 33912 / PCC 7942 / FACHB-805) (Anacystis nidulans R2).